We begin with the raw amino-acid sequence, 89 residues long: MNIRTASFTFIVVMMILSQTMADRFFNEPEEDDHLVESWNPFKKIAHRHCYPKNECITTNGKKTCKDYSCCQIVLFGKKTRSACTVVAQ.

Positions 1–22 (MNIRTASFTFIVVMMILSQTMA) are cleaved as a signal peptide. The propeptide occupies 23–38 (DRFFNEPEEDDHLVES). Trp-39 carries the 6'-bromotryptophan modification.

Contains 3 disulfide bonds.

Its function is as follows. Has antimicrobial activity against Gram-negative bacteria and Gram-positive bacteria with minimum inhibitory concentration (MIC) between 0.78 uM and 3.13 uM. In Echinus esculentus (Sea urchin), this protein is Strongylocin 2.